A 424-amino-acid chain; its full sequence is ATP-sensitive inward rectifier potassium channel 8 (424 aa).

Residues 1 to 69 (MLARKSIIPE…IFTTLVDLKW (69 aa)) lie on the Cytoplasmic side of the membrane. Serine 6 bears the Phosphoserine mark. Residues 70-94 (RHTLVIFTMSFLCSWLLFAIMWWLV) traverse the membrane as a helical segment. The Extracellular portion of the chain corresponds to 95–126 (AFAHGDIYAYMEKSGMEKSGLESTVCVTNVRS). The helical; Pore-forming intramembrane region spans 127-138 (FTSAFLFSIEVQ). The segment at residues 139–145 (VTIGFGG) is an intramembrane region (pore-forming). The Selectivity filter signature appears at 140 to 145 (TIGFGG). Residues 146 to 154 (RMMTEECPL) lie on the Extracellular side of the membrane. Residues 155–176 (AITVLILQNIVGLIINAVMLGC) form a helical membrane-spanning segment. Residues 177–424 (IFMKTAQAHR…PEGNQNTSES (248 aa)) lie on the Cytoplasmic side of the membrane. The interval 375–424 (SHQNSLRKRNSMRRNNSMRRNNSIRRNNSSLMVPKVQFMTPEGNQNTSES) is disordered. Residues 387–404 (RRNNSMRRNNSIRRNNSS) are compositionally biased toward low complexity.

It belongs to the inward rectifier-type potassium channel (TC 1.A.2.1) family. KCNJ8 subfamily. In terms of assembly, interacts with ABCC9. Predominantly detected in fetal and adult heart.

Its subcellular location is the membrane. It carries out the reaction K(+)(in) = K(+)(out). Functionally, inward rectifier potassium channels are characterized by a greater tendency to allow potassium to flow into the cell rather than out of it. Their voltage dependence is regulated by the concentration of extracellular potassium; as external potassium is raised, the voltage range of the channel opening shifts to more positive voltages. The inward rectification is mainly due to the blockage of outward current by internal magnesium. This channel is activated by internal ATP and can be blocked by external barium. Can form a sulfonylurea-sensitive but ATP-insensitive potassium channel with ABCC9. The chain is ATP-sensitive inward rectifier potassium channel 8 (KCNJ8) from Homo sapiens (Human).